Here is a 536-residue protein sequence, read N- to C-terminus: CRISPR-associated DNA-binding protein Cas12m (536 aa).

The tract at residues 1 to 59 (MPFGKKARHVKAYQFGADAPQEGMEAVLEQHRLRTDYYNALVEMELRQREERTALLANL) is recognition domain (REC1-N). Residues 60-105 (AAESGLESPNQVYERLKAAGEKGIRKHPEYVAARERQKALYGHPRL) are recognition domain (REC2). The recognition domain (REC1-C) stretch occupies residues 106–159 (LELQSRQREERNALRRSFGAKGLYSSNYLDVERAFDKARQSPELRFRRYSPHEG). The wedge domain (WED) stretch occupies residues 160–257 (RLAVLYTEGL…RWTVSVVVEV (98 aa)). The tract at residues 258 to 270 (EGPPVASPTGRGA) is linker. The segment at 271–481 (VAVDLGWRRV…QRGKPVRKLN (211 aa)) is ruvC-I. The target nucleic-acid binding (TNB) stretch occupies residues 482-516 (PAHTTTDCHACGGALVGDPAKELRLYCPTCERFYD). Residues Cys-489, Cys-492, Cys-508, and Cys-511 each coordinate Zn(2+). The interval 517–536 (QDENAARNLLRRAQEVQAQV) is ruvC-II. Asp-518 contributes to the Mg(2+) binding site.

Belongs to the CRISPR-associated DNA-binding protein Cas12m family. Mg(2+) is required as a cofactor. Requires Zn(2+) as cofactor.

With respect to regulation, pre-crRNA processing is inhibited by EDTA. CRISPR (clustered regularly interspaced short palindromic repeat), is an adaptive immune system that provides protection against mobile genetic elements (viruses, transposable elements and conjugative plasmids). CRISPR clusters contain sequences complementary to antecedent mobile elements and target invading nucleic acids. CRISPR clusters are transcribed and processed into CRISPR RNA (crRNA). Recognizes a short motif in the CRISPR repeat sequences (the 5' PAM or protospacer adjacent motif, 5'-TT/CN-3' in this organism) to help distinguish self versus nonself, as targets within the bacterial CRISPR locus do not have PAMs. Cas12m-crRNA binds DNA in a PAM-dependent, crRNA-guided fashion. DNA-binding probably inhibits transcription, leading to gene silencing. No dsDNA, ssDNA or RNA nuclease activity is seen for the crRNA-Cas12m complex. Upon expression in E.coli as a CRISPR region preferentially binds to its associated crRNA. Is required to process pre-crRNA to mature crRNA without a tracrRNA; processing is Mg(2+)-dependent and does not require the predicted RuvC domain catalytic site. The sequence is that of CRISPR-associated DNA-binding protein Cas12m from Allomeiothermus silvanus (strain ATCC 700542 / DSM 9946 / NBRC 106475 / NCIMB 13440 / VI-R2) (Thermus silvanus).